We begin with the raw amino-acid sequence, 411 residues long: 2,3-bisphosphoglycerate-independent phosphoglycerate mutase (411 aa).

The protein belongs to the BPG-independent phosphoglycerate mutase family. A-PGAM subfamily. As to quaternary structure, homotetramer. Mg(2+) serves as cofactor.

It catalyses the reaction (2R)-2-phosphoglycerate = (2R)-3-phosphoglycerate. The protein operates within carbohydrate degradation; glycolysis; pyruvate from D-glyceraldehyde 3-phosphate: step 3/5. With respect to regulation, inhibited to approximately 20% by EDTA. In terms of biological role, catalyzes the interconversion of 2-phosphoglycerate and 3-phosphoglycerate. This is 2,3-bisphosphoglycerate-independent phosphoglycerate mutase (apgM) from Pyrococcus furiosus (strain ATCC 43587 / DSM 3638 / JCM 8422 / Vc1).